A 504-amino-acid polypeptide reads, in one-letter code: ATP synthase subunit alpha (504 aa).

169–176 contributes to the ATP binding site; that stretch reads GDRQTGKT.

This sequence belongs to the ATPase alpha/beta chains family. In terms of assembly, F-type ATPases have 2 components, CF(1) - the catalytic core - and CF(0) - the membrane proton channel. CF(1) has five subunits: alpha(3), beta(3), gamma(1), delta(1), epsilon(1). CF(0) has three main subunits: a(1), b(2) and c(9-12). The alpha and beta chains form an alternating ring which encloses part of the gamma chain. CF(1) is attached to CF(0) by a central stalk formed by the gamma and epsilon chains, while a peripheral stalk is formed by the delta and b chains.

The protein localises to the cell membrane. It carries out the reaction ATP + H2O + 4 H(+)(in) = ADP + phosphate + 5 H(+)(out). Its function is as follows. Produces ATP from ADP in the presence of a proton gradient across the membrane. The alpha chain is a regulatory subunit. The sequence is that of ATP synthase subunit alpha from Clostridium kluyveri (strain ATCC 8527 / DSM 555 / NBRC 12016 / NCIMB 10680 / K1).